The following is a 389-amino-acid chain: MKKLLKSALLSAAFAGSVGSLQALPVGNPSDPSLLIDGTIWEGAAGDPCDPCATWCDAISLRAGFYGDYVFDRILKVDAPKTFSMGAKPTGSAAANYTTAVDRPNPAYNKHLHDAEWFTNAGFIALNIWDRFDVFCTLGASNGYIRGNSTAFNLVGLFGVKGTTVNANELPNVSLSNGVVELYTDTSFSWSVGARGALWECGCATLGAEFQYAQSKPKVEELNVICNVSQFSVNKPKGYKGVAFPLPTDAGVATATGTKSATINYHEWQVGASLSYRLNSLVPYIGVQWSRATFDADNIRIAQPKLPTAVLNLTAWNPSLLGNATALSTTDSFSDFMQIVSCQINKFKSRKACGVTVGATLVDADKWSLTAEARLINERAAHVSGQFRF.

A signal peptide spans 1–23; the sequence is MKKLLKSALLSAAFAGSVGSLQA.

This sequence belongs to the chlamydial porin (CP) (TC 1.B.2) family. As to quaternary structure, part of a disulfide cross-linked outer membrane complex (COMC) composed of the major outer membrane porin (MOMP), the small cysteine-rich protein (OmcA) and the large cysteine-rich periplasmic protein (OmcB).

The protein resides in the cell outer membrane. In terms of biological role, in elementary bodies (EBs, the infectious stage, which is able to survive outside the host cell) provides the structural integrity of the outer envelope through disulfide cross-links with the small cysteine-rich protein and the large cysteine-rich periplasmic protein. It has been described in publications as the Sarkosyl-insoluble COMC (Chlamydia outer membrane complex), and serves as the functional equivalent of peptidoglycan. Functionally, permits diffusion of specific solutes through the outer membrane. This chain is Major outer membrane porin (ompA), found in Chlamydia pneumoniae (Chlamydophila pneumoniae).